The following is a 223-amino-acid chain: Octanoyltransferase (223 aa).

A BPL/LPL catalytic domain is found at 35–214; the sequence is GEARELIWLL…HFPAMLAGLR (180 aa). Substrate-binding positions include 74-81, 145-147, and 158-160; these read RGGRYTYH, AIG, and GFS. C176 (acyl-thioester intermediate) is an active-site residue.

Belongs to the LipB family.

The protein localises to the cytoplasm. It catalyses the reaction octanoyl-[ACP] + L-lysyl-[protein] = N(6)-octanoyl-L-lysyl-[protein] + holo-[ACP] + H(+). The protein operates within protein modification; protein lipoylation via endogenous pathway; protein N(6)-(lipoyl)lysine from octanoyl-[acyl-carrier-protein]: step 1/2. In terms of biological role, catalyzes the transfer of endogenously produced octanoic acid from octanoyl-acyl-carrier-protein onto the lipoyl domains of lipoate-dependent enzymes. Lipoyl-ACP can also act as a substrate although octanoyl-ACP is likely to be the physiological substrate. This Rhizorhabdus wittichii (strain DSM 6014 / CCUG 31198 / JCM 15750 / NBRC 105917 / EY 4224 / RW1) (Sphingomonas wittichii) protein is Octanoyltransferase.